Here is a 210-residue protein sequence, read N- to C-terminus: Large ribosomal subunit protein bL17 (210 aa).

The segment at 177–210 (TRSAQRPAFEQDAPESDSAPEAEAKTEEETASAN) is disordered.

Belongs to the bacterial ribosomal protein bL17 family. As to quaternary structure, part of the 50S ribosomal subunit. Contacts protein L32.

This chain is Large ribosomal subunit protein bL17, found in Rhodopirellula baltica (strain DSM 10527 / NCIMB 13988 / SH1).